Consider the following 291-residue polypeptide: Kynurenine formamidase (291 aa).

Positions 33–37 (HGGAW) match the HGGXW motif. Catalysis depends on Ser-107, which acts as the Nucleophile. Catalysis depends on residues Asp-242 and His-280.

It belongs to the kynurenine formamidase family. In terms of assembly, homodimer.

The enzyme catalyses N-formyl-L-kynurenine + H2O = L-kynurenine + formate + H(+). It participates in amino-acid degradation; L-tryptophan degradation via kynurenine pathway; L-kynurenine from L-tryptophan: step 2/2. Its function is as follows. Catalyzes the hydrolysis of N-formyl-L-kynurenine to L-kynurenine, the second step in the kynurenine pathway of tryptophan degradation. Kynurenine may be further oxidized to nicotinic acid, NAD(H) and NADP(H). Required for elimination of toxic metabolites. In Debaryomyces hansenii (strain ATCC 36239 / CBS 767 / BCRC 21394 / JCM 1990 / NBRC 0083 / IGC 2968) (Yeast), this protein is Kynurenine formamidase.